Reading from the N-terminus, the 348-residue chain is CCAAT/enhancer-binding protein beta (348 aa).

The required for Lys-174 sumoylation stretch occupies residues 1–24; sequence MQRLVVWDPVCLPLPPPPPAFKSM. Arginine 3 bears the Asymmetric dimethylarginine; by CARM1 mark. The interval 24–135 is required for MYC transcriptional repression; sequence MEVANFYYEA…YGGKNCKKAA (112 aa). Lysine 43 bears the N6-acetyllysine; alternate mark. At lysine 43 the chain carries N6-methylated lysine; alternate. Disordered stretches follow at residues 44-65 and 79-112; these read AAPA…ELGS and LEPL…ASSG. Pro residues predominate over residues 47–59; it reads AAPPADRPGPRPP. A 9aaTAD motif is present at residues 116–124; the sequence is DFLSDLFSD. 2 positions are modified to N6-acetyllysine; by KAT2A and KAT2B: lysine 129 and lysine 132. The residue at position 133 (lysine 133) is an N6-acetyllysine; by KAT2A and KAT2B; alternate. Residue lysine 133 forms a Glycyl lysine isopeptide (Lys-Gly) (interchain with G-Cter in SUMO2); alternate linkage. A disordered region spans residues 158–178; that stretch reads APLHPPPPPPPPPAELKAEPG. Positions 160–171 are enriched in pro residues; it reads LHPPPPPPPPPA. Residue lysine 174 forms a Glycyl lysine isopeptide (Lys-Gly) (interchain with G-Cter in SUMO2); alternate linkage. Residue lysine 174 forms a Glycyl lysine isopeptide (Lys-Gly) (interchain with G-Cter in SUMO); alternate linkage. Residues lysine 185 and lysine 187 each participate in a glycyl lysine isopeptide (Lys-Gly) (interchain with G-Cter in SUMO2) cross-link. Over residues 219–259 the composition is skewed to low complexity; the sequence is SGSSGSLSTSSSSSPPGTPSPADAKATPAAAACYAGAAPAP. The interval 219–277 is disordered; sequence SGSSGSLSTSSSSSPPGTPSPADAKATPAAAACYAGAAPAPSQVKSKAKKTVDKHSDEY. Threonine 227 is subject to Phosphothreonine; by GSK3-beta. O-linked (GlcNAc) serine glycans are attached at residues serine 228 and serine 229. Serine 232 carries the post-translational modification Phosphoserine; by GSK3-beta. Threonine 236 is modified (phosphothreonine; by RPS6KA1, CDK2 and MAPK). Glycyl lysine isopeptide (Lys-Gly) (interchain with G-Cter in SUMO2) cross-links involve residues lysine 263 and lysine 265. Residues 268-277 show a composition bias toward basic and acidic residues; the sequence is KTVDKHSDEY. At threonine 269 the chain carries Phosphothreonine; by RPS6KA1 and PKC/PRKCA. A bZIP domain is found at 274 to 337; the sequence is SDEYKIRRER…STLRNLFKTL (64 aa). The segment at 278 to 298 is basic motif; sequence KIRRERNNIAVRKSRDKAKMR. A Phosphoserine; by PKC/PRKCA modification is found at serine 291. A leucine-zipper region spans residues 300-307; sequence LETQHKVL. Serine 328 carries the phosphoserine; by CaMK2 modification. A Glycyl lysine isopeptide (Lys-Gly) (interchain with G-Cter in SUMO2) cross-link involves residue lysine 335.

Belongs to the bZIP family. C/EBP subfamily. In terms of assembly, binds DNA as a homodimer and as a heterodimer. Interacts with ATF4. Binds DNA as a heterodimer with ATF4. Interacts with MYB; within the complex, MYB and CEBPB bind to different promoter regions. Can form stable heterodimers with CEBPA, CEBPD and CEBPG. Interacts with SIX1. Interacts with TRIM28 and PTGES2. Interacts with PRDM16. Interacts with CCDC85B. Forms a complex with THOC5. Interacts with ZNF638; this interaction increases transcriptional activation. Interacts with CIDEA and CIDEC; these interactions increase transcriptional activation of a subset of CEBPB downstream target genes. Interacts with DDIT3/CHOP. Interacts with EP300; recruits EP300 to chromatin. Interacts with RORA; the interaction disrupts interaction with EP300. Interacts (not methylated) with MED23, MED26, SMARCA2, SMARCB1 and SMARCC1. Interacts with KAT2A and KAT2B. Interacts with ATF5; EP300 is required for ATF5 and CEBPB interaction and DNA binding. Interacts with NFE2L1; the heterodimer represses expression of DSPP during odontoblast differentiation. In terms of processing, methylated. Methylation at Arg-3 by CARM1 and at Lys-43 by EHMT2 inhibit transactivation activity. Methylation is probably inhibited by phosphorylation at Thr-236. Sumoylated by polymeric chains of SUMO2 or SUMO3. Sumoylation at Lys-174 is required for inhibition of T-cells proliferation. In adipocytes, sumoylation at Lys-174 by PIAS1 leads to ubiquitination and subsequent proteasomal degradation. Desumoylated by SENP2, which abolishes ubiquitination and stabilizes protein levels. Post-translationally, ubiquitinated, leading to proteasomal degradation. In terms of processing, phosphorylated at Thr-236 by MAPK and CDK2, serves to prime phosphorylation at Thr-227 and Ser-232 by GSK3B and acquire DNA-binding as well as transactivation activities, required to induce adipogenesis. MAPK and CDK2 act sequentially to maintain Thr-236 in the primed phosphorylated state during mitotical cloning expansion and thereby progression of terminal differentiation. Phosphorylation at Thr-269 enhances transactivation activity. Phosphorylation at Ser-328 in response to calcium increases transactivation activity. Phosphorylated at Thr-236 by RPS6KA1. O-glycosylated, glycosylation at Ser-228 and Ser-229 prevents phosphorylation on Thr-236, Ser-232 and Thr-227 and DNA binding activity which delays the adipocyte differentiation program. Post-translationally, acetylated. Acetylation at Lys-43 is an important and dynamic regulatory event that contributes to its ability to transactivate target genes, including those associated with adipogenesis and adipocyte function. Deacetylation by HDAC1 represses its transactivation activity. Acetylated by KAT2A and KAT2B within a cluster of lysine residues between amino acids 129-133, this acetylation is strongly induced by glucocorticoid treatment and enhances transactivation activity.

The protein localises to the nucleus. It is found in the cytoplasm. In terms of biological role, important transcription factor regulating the expression of genes involved in immune and inflammatory responses. Also plays a significant role in adipogenesis, as well as in the gluconeogenic pathway, liver regeneration, and hematopoiesis. The consensus recognition site is 5'-T[TG]NNGNAA[TG]-3'. Its functional capacity is governed by protein interactions and post-translational protein modifications. During early embryogenesis, plays essential and redundant roles with CEBPA. Has a promitotic effect on many cell types such as hepatocytes and adipocytes but has an antiproliferative effect on T-cells by repressing MYC expression, facilitating differentiation along the T-helper 2 lineage. Binds to regulatory regions of several acute-phase and cytokines genes and plays a role in the regulation of acute-phase reaction and inflammation. Also plays a role in intracellular bacteria killing. During adipogenesis, is rapidly expressed and, after activation by phosphorylation, induces CEBPA and PPARG, which turn on the series of adipocyte genes that give rise to the adipocyte phenotype. The delayed transactivation of the CEBPA and PPARG genes by CEBPB appears necessary to allow mitotic clonal expansion and thereby progression of terminal differentiation. Essential for female reproduction because of a critical role in ovarian follicle development. Restricts osteoclastogenesis: together with NFE2L1; represses expression of DSPP during odontoblast differentiation. The chain is CCAAT/enhancer-binding protein beta (CEBPB) from Bos taurus (Bovine).